A 171-amino-acid polypeptide reads, in one-letter code: UPF0763 protein Hac_0849 (171 aa).

It belongs to the UPF0763 family.

The polypeptide is UPF0763 protein Hac_0849 (Helicobacter acinonychis (strain Sheeba)).